The primary structure comprises 287 residues: MPSNNFKFFLTWWLTQQVTGLAVPFMLDMAPNAFDDQYEGCVEDMEKKAPQLLQEDFNMNEELKLEWEKAEIKWKEIKNCMSYPAGFHDFHGTALVAYTGNIHRSLNEATREFKINPGNFHYKAFHYYLTRALQLLSDQGCRSVYRGTNVRFRYTGKGSVRFGHFASSSLNRSVATSSPFFNGQGTLFIIKTCLGAHIKHCSYYTHEEEVLIPGYEVFHKVKTQSVERYIQISLDSPKRKKSNFNCFYSGSTQAANVSSLGSRESCVSLFLVVLLGLLVQQLTLAEP.

Residues 1 to 20 (MPSNNFKFFLTWWLTQQVTG) form the signal peptide. 3 cysteine pairs are disulfide-bonded: Cys-41/Cys-246, Cys-80/Cys-201, and Cys-141/Cys-193. Positions 61 to 241 (EELKLEWEKA…ISLDSPKRKK (181 aa)) constitute a TR mART core domain. Residues Tyr-98 and Arg-146 each coordinate NAD(+). Active-site residues include Arg-146 and Ser-167. A glycan (N-linked (GlcNAc...) asparagine) is linked at Asn-171. Ser-202 provides a ligand contact to NAD(+). Residue Glu-209 is part of the active site. A glycan (N-linked (GlcNAc...) asparagine) is linked at Asn-256. The GPI-anchor amidated serine moiety is linked to residue Ser-258. Residues 259 to 287 (SLGSRESCVSLFLVVLLGLLVQQLTLAEP) constitute a propeptide, removed in mature form.

This sequence belongs to the Arg-specific ADP-ribosyltransferase family. It is proposed that in the absence of reducing agents, a disulfide bond is formed between Cys-80 and Cys-201, leading to a conformational change that reduces the catalytic rate of NAD glycohydrolysis. In terms of tissue distribution, expressed in spleen, intestine and thymus.

It is found in the cell membrane. It carries out the reaction L-arginyl-[protein] + NAD(+) = N(omega)-(ADP-D-ribosyl)-L-arginyl-[protein] + nicotinamide + H(+). The catalysed reaction is NAD(+) + H2O = ADP-D-ribose + nicotinamide + H(+). Functionally, has both ADP-ribosyltransferase activity and thiol-dependent NAD(+) glycohydrolase activity. This chain is T-cell ecto-ADP-ribosyltransferase 1 (Art2a), found in Mus musculus (Mouse).